We begin with the raw amino-acid sequence, 460 residues long: Interleukin-6 receptor subunit alpha (460 aa).

The first 19 residues, 1-19 (MLTVGCTLLVALLAAPAVA), serve as a signal peptide directing secretion. In terms of domain architecture, Ig-like C2-type spans 20–116 (LVLGSCRALE…DVPPEEPKLS (97 aa)). Residues 20–364 (LVLGSCRALE…VQESSSMSLP (345 aa)) are Extracellular-facing. Disulfide bonds link cysteine 25–cysteine 190, cysteine 47–cysteine 92, cysteine 117–cysteine 128, and cysteine 162–cysteine 173. Asparagine 32 and asparagine 55 each carry an N-linked (GlcNAc...) asparagine glycan. 2 Fibronectin type-III domains span residues 109-214 (PPEE…VQPD) and 215-313 (PPAN…TPWI). A glycan (N-linked (GlcNAc...) asparagine) is linked at asparagine 150. The N-linked (GlcNAc...) asparagine glycan is linked to asparagine 218. The WSXWS motif motif lies at 300–304 (WSEWS). Residues 365–385 (TFLVAGGSLAFGLLLCVFIIL) traverse the membrane as a helical segment. The Cytoplasmic portion of the chain corresponds to 386 to 460 (RLKQKWKSEA…NSNRDYLFPR (75 aa)).

This sequence belongs to the type I cytokine receptor family. Type 3 subfamily. As to quaternary structure, component of a hexamer of two molecules each of IL6, IL6R and IL6ST; first binds to IL6 to associate with the signaling subunit IL6ST. Interacts (via N-terminal ectodomain) with SORL1; this interaction may affect IL6-binding to IL6R, hence decrease IL6 'classic-signaling'. In terms of assembly, also interacts with SORL1; this interaction leads to soluble IL6R internalization. May form a trimeric complex with the soluble SORL1 ectodomain and circulating IL6 receptor; this interaction might stabilize circulating IL6, hence promote IL6 'trans-signaling'. Post-translationally, a short soluble form is also released from the membrane by proteolysis. The sIL6R is formed by limited proteolysis of membrane-bound receptors, a process referred to as ectodomain shedding. mIL6R is cleaved by the proteases ADAM10 and ADAM17. In terms of processing, glycosylated. Glycosylation is dispensable for transport, signaling, and cell-surface turnover. Glycosylation at Asn-55 is a protease-regulatory exosite. Glycosylation is required for ADAM17-mediated proteolysis. As to expression, expressed by dendritic cells. In terms of tissue distribution, detected in the cerebrospinal fluid.

The protein resides in the cell membrane. It localises to the secreted. Classic and trans-signaling are both inhibited by tocilizumab, a humanized monoclonal antibody that blocks interleukin IL6R signaling. Its function is as follows. Part of the receptor for interleukin 6. Binds to IL6 with low affinity, but does not transduce a signal. Signal activation necessitate an association with IL6ST. Activation leads to the regulation of the immune response, acute-phase reactions and hematopoiesis. The interaction with membrane-bound IL6R and IL6ST stimulates 'classic signaling', the restricted expression of the IL6R limits classic IL6 signaling to only a few tissues such as the liver and some cells of the immune system. Whereas the binding of IL6 and soluble IL6R to IL6ST stimulates 'trans-signaling'. Alternatively, 'cluster signaling' occurs when membrane-bound IL6:IL6R complexes on transmitter cells activate IL6ST receptors on neighboring receiver cells. In terms of biological role, signaling via the membrane-bound IL6R is mostly regenerative and anti-inflammatory. Drives naive CD4(+) T cells to the Th17 lineage, through 'cluster signaling' by dendritic cells. Soluble form of IL6 receptor (sIL6R) that acts as an agonist of IL6 activity. The IL6:sIL6R complex (hyper-IL6) binds to IL6ST/gp130 on cell surfaces and induces signaling also on cells that do not express membrane-bound IL6R in a process called IL6 'trans-signaling'. sIL6R is causative for the pro-inflammatory properties of IL6 and an important player in the development of chronic inflammatory diseases. In complex with IL6, is required for induction of VEGF production. Plays a protective role during liver injury, being required for maintenance of tissue regeneration. 'Trans-signaling' in central nervous system regulates energy and glucose homeostasis. The polypeptide is Interleukin-6 receptor subunit alpha (Mus musculus (Mouse)).